We begin with the raw amino-acid sequence, 328 residues long: N-acetyl-gamma-glutamyl-phosphate reductase (328 aa).

Residue Cys-143 is part of the active site.

It belongs to the NAGSA dehydrogenase family. Type 1 subfamily.

Its subcellular location is the cytoplasm. The catalysed reaction is N-acetyl-L-glutamate 5-semialdehyde + phosphate + NADP(+) = N-acetyl-L-glutamyl 5-phosphate + NADPH + H(+). Its pathway is amino-acid biosynthesis; L-arginine biosynthesis; N(2)-acetyl-L-ornithine from L-glutamate: step 3/4. Its function is as follows. Catalyzes the NADPH-dependent reduction of N-acetyl-5-glutamyl phosphate to yield N-acetyl-L-glutamate 5-semialdehyde. In Methanoregula boonei (strain DSM 21154 / JCM 14090 / 6A8), this protein is N-acetyl-gamma-glutamyl-phosphate reductase.